We begin with the raw amino-acid sequence, 170 residues long: Large ribosomal subunit protein uL10 (170 aa).

This sequence belongs to the universal ribosomal protein uL10 family. As to quaternary structure, part of the ribosomal stalk of the 50S ribosomal subunit. The N-terminus interacts with L11 and the large rRNA to form the base of the stalk. The C-terminus forms an elongated spine to which L12 dimers bind in a sequential fashion forming a multimeric L10(L12)X complex.

Forms part of the ribosomal stalk, playing a central role in the interaction of the ribosome with GTP-bound translation factors. The sequence is that of Large ribosomal subunit protein uL10 (rplJ) from Chlamydia pneumoniae (Chlamydophila pneumoniae).